We begin with the raw amino-acid sequence, 130 residues long: Serum amyloid A-4 protein (130 aa).

Positions 1–18 are cleaved as a signal peptide; it reads MRLFTGIVFCSLVMGVTS. The N-linked (GlcNAc...) asparagine; partial glycan is linked to asparagine 94. The interval 101 to 130 is disordered; it reads DSKSNEKAEEWGRSGKDPDRFRPDGLPKKY.

The protein belongs to the SAA family. In terms of assembly, apolipoprotein of the HDL complex. As to expression, expressed by the liver; secreted in plasma.

It is found in the secreted. Its function is as follows. Major acute phase reactant. In Homo sapiens (Human), this protein is Serum amyloid A-4 protein.